The following is a 138-amino-acid chain: ATP synthase epsilon chain (138 aa).

Belongs to the ATPase epsilon chain family. F-type ATPases have 2 components, CF(1) - the catalytic core - and CF(0) - the membrane proton channel. CF(1) has five subunits: alpha(3), beta(3), gamma(1), delta(1), epsilon(1). CF(0) has three main subunits: a, b and c.

It localises to the cell membrane. Produces ATP from ADP in the presence of a proton gradient across the membrane. The chain is ATP synthase epsilon chain from Caldanaerobacter subterraneus subsp. tengcongensis (strain DSM 15242 / JCM 11007 / NBRC 100824 / MB4) (Thermoanaerobacter tengcongensis).